Consider the following 366-residue polypeptide: Histidinol-phosphate aminotransferase (366 aa).

N6-(pyridoxal phosphate)lysine is present on lysine 222.

It belongs to the class-II pyridoxal-phosphate-dependent aminotransferase family. Histidinol-phosphate aminotransferase subfamily. Homodimer. Pyridoxal 5'-phosphate is required as a cofactor.

It carries out the reaction L-histidinol phosphate + 2-oxoglutarate = 3-(imidazol-4-yl)-2-oxopropyl phosphate + L-glutamate. It functions in the pathway amino-acid biosynthesis; L-histidine biosynthesis; L-histidine from 5-phospho-alpha-D-ribose 1-diphosphate: step 7/9. The sequence is that of Histidinol-phosphate aminotransferase from Lysinibacillus sphaericus (strain C3-41).